The following is a 400-amino-acid chain: DNA primase small subunit PriS (400 aa).

Residues Asp-98, Asp-100, and Asp-306 contribute to the active site.

This sequence belongs to the eukaryotic-type primase small subunit family. As to quaternary structure, heterodimer of a small subunit (PriS) and a large subunit (PriL). It depends on Mg(2+) as a cofactor. The cofactor is Mn(2+).

Functionally, catalytic subunit of DNA primase, an RNA polymerase that catalyzes the synthesis of short RNA molecules used as primers for DNA polymerase during DNA replication. The small subunit contains the primase catalytic core and has DNA synthesis activity on its own. Binding to the large subunit stabilizes and modulates the activity, increasing the rate of DNA synthesis while decreasing the length of the DNA fragments, and conferring RNA synthesis capability. The DNA polymerase activity may enable DNA primase to also catalyze primer extension after primer synthesis. May also play a role in DNA repair. This Methanocella arvoryzae (strain DSM 22066 / NBRC 105507 / MRE50) protein is DNA primase small subunit PriS.